A 211-amino-acid chain; its full sequence is MVCDIYDALPVEIWIHIIELSKEFNLLLTNTKFIKLYYLVKTHKSILKKIVKNGYFENLKYIIENRIIVITNINDVLLLACKYGNLPIVKYLVSKGADICAEQNSPIKNATYYGHLDVVKYLVSNGAKFFGSYSSAIIIASSSGKLDIVKYFVPGKIYFCLEMEIALVCATENKHTNIVDYLNSMRSSYFDKCFNFIACLVKNFLPSIYVY.

5 ANK repeats span residues 31–61, 72–101, 103–131, 133–162, and 163–191; these read TKFI…NLKY, NIND…DICA, QNSP…KFFG, YSSA…FCLE, and MEIA…SYFD.

In Acanthamoeba polyphaga mimivirus (APMV), this protein is Putative ankyrin repeat protein R810.